The chain runs to 382 residues: uncharacterized protein (382 aa).

The next 12 membrane-spanning stretches (helical) occupy residues 8-28 (VLLLLCGLLLLTLAIAVLNTL), 39-61 (PTWQVGMVSSSYFTGNLLGTLLT), 75-95 (YLASLIFAAGCVGLGLMVGFW), 102-122 (FIAGVGCAMIWVVVESALMCS), 131-151 (LLAAYMMVYYVGTVLGQLMIS), 157-177 (LMSVLPWVTGMVLAAILPLLF), 204-224 (LGVNGCIISGIVLGSLYGLMP), 236-256 (GIGFWMAVMVSAGIVGQWPIG), 265-284 (LLVLRVQVFVVILGCLAMLG), 289-311 (APALFILGAAGFTLYPVAMAWAC), 325-345 (ALLLSYTIGSLLGPTFTAMLM), and 349-369 (SDNLLFIMIASVAFIYLLMLL).

Belongs to the major facilitator superfamily. YcaD (TC 2.A.1.26) family.

Its subcellular location is the cell inner membrane. This is an uncharacterized protein from Enterobacter sp. (strain 638).